A 189-amino-acid polypeptide reads, in one-letter code: MEVNKKQLADIFGASIRTIQNWQEQGMPVLRGGGKGNEVLYDSAAVIRWYAERDAEIENEKLRREVEELRQASETDLQPGTIEYERHRLTRAQADAQELKNARDSAEVVETAFCTFVLSRIAGEIASILDGIPLSVQRRFPELENRHVDFLKRDIIKAMNKAAALDELIPGLLSEYNRADRQYAGGSRS.

Belongs to the terminase small subunit family.

The chain is Prophage DNA-packing protein NohA (nohA) from Escherichia coli (strain K12).